The chain runs to 568 residues: Oxygen-dependent choline dehydrogenase (568 aa).

Position 8 to 37 (8 to 37 (DYVIIGGGSAGSVLGNRLTEDKDKEVLVLE)) interacts with FAD. H473 (proton acceptor) is an active-site residue.

The protein belongs to the GMC oxidoreductase family. FAD serves as cofactor.

The enzyme catalyses choline + A = betaine aldehyde + AH2. It catalyses the reaction betaine aldehyde + NAD(+) + H2O = glycine betaine + NADH + 2 H(+). The protein operates within amine and polyamine biosynthesis; betaine biosynthesis via choline pathway; betaine aldehyde from choline (cytochrome c reductase route): step 1/1. Its function is as follows. Involved in the biosynthesis of the osmoprotectant glycine betaine. Catalyzes the oxidation of choline to betaine aldehyde and betaine aldehyde to glycine betaine at the same rate. This chain is Oxygen-dependent choline dehydrogenase, found in Staphylococcus haemolyticus (strain JCSC1435).